A 305-amino-acid chain; its full sequence is Tyrosine recombinase XerC (305 aa).

One can recognise a Core-binding (CB) domain in the interval 1–94; the sequence is MSSVDEFLTY…ACRSYYAWLL (94 aa). Residues 115 to 292 enclose the Tyr recombinase domain; sequence KLPQVLDADE…DFQHLAKVYD (178 aa). Residues arginine 154, lysine 178, histidine 244, arginine 247, and histidine 270 contribute to the active site. The active-site O-(3'-phospho-DNA)-tyrosine intermediate is the tyrosine 279.

This sequence belongs to the 'phage' integrase family. XerC subfamily. Forms a cyclic heterotetrameric complex composed of two molecules of XerC and two molecules of XerD.

The protein localises to the cytoplasm. Its function is as follows. Site-specific tyrosine recombinase, which acts by catalyzing the cutting and rejoining of the recombining DNA molecules. The XerC-XerD complex is essential to convert dimers of the bacterial chromosome into monomers to permit their segregation at cell division. It also contributes to the segregational stability of plasmids. In Xanthomonas axonopodis pv. citri (strain 306), this protein is Tyrosine recombinase XerC.